Here is a 262-residue protein sequence, read N- to C-terminus: uncharacterized protein (262 aa).

Belongs to the AB hydrolase superfamily. AB hydrolase 2 family.

This is an uncharacterized protein from Mycosarcoma maydis (Corn smut fungus).